We begin with the raw amino-acid sequence, 198 residues long: DnaJ homolog subfamily C member 12 (198 aa).

Residue M1 is modified to N-acetylmethionine. Residues 14 to 79 (DYYALLGCDE…ESRARYDHWR (66 aa)) form the J domain. The disordered stretch occupies residues 114 to 177 (EGSGQTFTSS…GLSDLNCGHL (64 aa)). Polar residues predominate over residues 116-125 (SGQTFTSSVP). A compositionally biased stretch (basic and acidic residues) spans 126–156 (NKERSEQRETKKGDPDSNPEKMKQKEPKFPE). 3 positions are modified to phosphoserine: S160, S166, and S182.

As to quaternary structure, interacts with HSPA8. Interacts with TPH1. Interacts with TPH2. As to expression, highest levels of expression are detected in kidney, pineal gland, and raphe nuclei in the brain where it localizes to serotonerigic neurons.

The protein resides in the cytoplasm. Functionally, probable co-chaperone that participates in the proper folding of biopterin-dependent aromatic amino acid hydroxylases, which include phenylalanine-4-hydroxylase (PAH), tyrosine 3-monooxygenase (TH) and peripheral and neuronal tryptophan hydroxylases (TPH1 and TPH2). The polypeptide is DnaJ homolog subfamily C member 12 (Dnajc12) (Mus musculus (Mouse)).